Reading from the N-terminus, the 442-residue chain is ORC1-type DNA replication protein 8 (442 aa).

ATP-binding positions include 66 to 70 and Y218; that span reads VGKTA.

The protein belongs to the CDC6/cdc18 family.

Involved in regulation of DNA replication. The chain is ORC1-type DNA replication protein 8 (cdc6h) from Haloarcula marismortui (strain ATCC 43049 / DSM 3752 / JCM 8966 / VKM B-1809) (Halobacterium marismortui).